A 120-amino-acid polypeptide reads, in one-letter code: MSCATLPAEARLHRPSEFTAALKGRRLARGALFIVSAAPATSAPACARLGLVIAKRYAALATTRNAIKRVLREAFRHRRQALPAQDYVIRLHSKVGPLSLTALKRAARTEADAHFGRIAR.

The protein belongs to the RnpA family. Consists of a catalytic RNA component (M1 or rnpB) and a protein subunit.

It catalyses the reaction Endonucleolytic cleavage of RNA, removing 5'-extranucleotides from tRNA precursor.. RNaseP catalyzes the removal of the 5'-leader sequence from pre-tRNA to produce the mature 5'-terminus. It can also cleave other RNA substrates such as 4.5S RNA. The protein component plays an auxiliary but essential role in vivo by binding to the 5'-leader sequence and broadening the substrate specificity of the ribozyme. The chain is Ribonuclease P protein component from Bordetella avium (strain 197N).